The chain runs to 154 residues: Neurotrophin-3 (154 aa).

The N-terminal stretch at 1-18 is a signal peptide; it reads MSILFYVMFLAYLRGVQG. Residues 19-134 constitute a propeptide that is removed on maturation; that stretch reads NSMDQRSLPE…VNSRSPRRKR (116 aa).

The protein belongs to the NGF-beta family.

The protein resides in the secreted. Seems to promote the survival of visceral and proprioceptive sensory neurons. This is Neurotrophin-3 (NTF3) from Cervus elaphus (Red deer).